A 119-amino-acid polypeptide reads, in one-letter code: MARVKGGTVTRKRRKKVLKLAKGYYGSKHTLFKSAKEQVMNSYYYAFRDRRQKKRDFRKLWIARINAAARMNGLSYSKLMHGLKLAEIDINRKMLADLAVNDAAAFTALAEQAKDALSK.

It belongs to the bacterial ribosomal protein bL20 family.

In terms of biological role, binds directly to 23S ribosomal RNA and is necessary for the in vitro assembly process of the 50S ribosomal subunit. It is not involved in the protein synthesizing functions of that subunit. This is Large ribosomal subunit protein bL20 from Enterococcus faecalis (strain ATCC 700802 / V583).